The sequence spans 1032 residues: Probable ATP-dependent RNA helicase DDX46 (1032 aa).

The span at 1–24 (MGRESRHYRKRSASRGRSGSRSRS) shows a compositional bias: basic residues. The tract at residues 1 to 227 (MGRESRHYRK…TEMEDEELDP (227 aa)) is disordered. Glycine 2 is lipidated: N-myristoyl glycine. Positions 26 to 49 (SPSDKRSKRGDDRRSRSRDRDRRR) are enriched in basic and acidic residues. Basic residues-rich tracts occupy residues 50-73 (ERSRSRDKRRSRSRDRKRLRRSRS) and 81-103 (ERRRSRSRDRRRSRSRSRGRRSR). The segment covering 112 to 200 (KKTENRSRSK…EMKQGKKWSL (89 aa)) has biased composition (basic and acidic residues). The stretch at 152 to 197 (DQNKLEEEMRKRKERVEKWREEQRKKAMENIGELKKEIEEMKQGKK) forms a coiled coil. Lysine 186 participates in a covalent cross-link: Glycyl lysine isopeptide (Lys-Gly) (interchain with G-Cter in SUMO2). Serine 199 carries the post-translational modification Phosphoserine. Positions 201 to 211 (EDDDDDEDDPA) are enriched in acidic residues. Position 263 is an N6-acetyllysine (lysine 263). Tyrosine 294 is modified (phosphotyrosine). Serine 295 and serine 296 each carry phosphoserine. Residue lysine 325 forms a Glycyl lysine isopeptide (Lys-Gly) (interchain with G-Cter in SUMO2) linkage. Serine 346 is subject to Phosphoserine. Positions 372 to 400 (KSWVQCGISMKILNSLKKHGYEKPTPIQT) match the Q motif motif. The Helicase ATP-binding domain maps to 403 to 581 (IPAIMSGRDL…RRILSKPIEV (179 aa)). 416–423 (AKTGSGKT) is a binding site for ATP. The DEAD box motif lies at 529 to 532 (DEAD). One can recognise a Helicase C-terminal domain in the interval 592–753 (DVEQQVIVIE…AVPPDLEKLW (162 aa)). Lysine 776 carries the N6-acetyllysine modification. A Glycyl lysine isopeptide (Lys-Gly) (interchain with G-Cter in SUMO2) cross-link involves residue lysine 779. Serine 804 carries the phosphoserine modification. Lysine 904 carries the N6-acetyllysine modification. Residues lysine 908 and lysine 916 each participate in a glycyl lysine isopeptide (Lys-Gly) (interchain with G-Cter in SUMO2) cross-link. At serine 929 the chain carries Phosphoserine.

Belongs to the DEAD box helicase family. DDX46/PRP5 subfamily. As to quaternary structure, component of the 17S U2 SnRNP complex, a ribonucleoprotein complex that contains small nuclear RNA (snRNA) U2 and a number of specific proteins. Within the 17S U2 SnRNP complex, DDX46 is part of the SF3B subcomplex, which is required for 'A' complex assembly formed by the stable binding of U2 snRNP to the branchpoint sequence in pre-mRNA. Recruited to the 17S U2 SnRNP complex following release of DDX42; DDX42 and DDX46 bind the SF3B subcomplex in a competitive manner.

It localises to the nucleus speckle. The protein resides in the nucleus. Its subcellular location is the cajal body. It carries out the reaction ATP + H2O = ADP + phosphate + H(+). In terms of biological role, component of the 17S U2 SnRNP complex of the spliceosome, a large ribonucleoprotein complex that removes introns from transcribed pre-mRNAs. The 17S U2 SnRNP complex (1) directly participates in early spliceosome assembly and (2) mediates recognition of the intron branch site during pre-mRNA splicing by promoting the selection of the pre-mRNA branch-site adenosine, the nucleophile for the first step of splicing. Within the 17S U2 SnRNP complex, DDX46 plays essential roles during assembly of pre-spliceosome and proofreading of the branch site. The chain is Probable ATP-dependent RNA helicase DDX46 (Ddx46) from Mus musculus (Mouse).